The chain runs to 349 residues: UDP-3-O-acylglucosamine N-acyltransferase (349 aa).

The active-site Proton acceptor is His-248.

The protein belongs to the transferase hexapeptide repeat family. LpxD subfamily. Homotrimer.

The enzyme catalyses a UDP-3-O-[(3R)-3-hydroxyacyl]-alpha-D-glucosamine + a (3R)-hydroxyacyl-[ACP] = a UDP-2-N,3-O-bis[(3R)-3-hydroxyacyl]-alpha-D-glucosamine + holo-[ACP] + H(+). The protein operates within bacterial outer membrane biogenesis; LPS lipid A biosynthesis. In terms of biological role, catalyzes the N-acylation of UDP-3-O-acylglucosamine using 3-hydroxyacyl-ACP as the acyl donor. Is involved in the biosynthesis of lipid A, a phosphorylated glycolipid that anchors the lipopolysaccharide to the outer membrane of the cell. The polypeptide is UDP-3-O-acylglucosamine N-acyltransferase (Gloeothece citriformis (strain PCC 7424) (Cyanothece sp. (strain PCC 7424))).